We begin with the raw amino-acid sequence, 239 residues long: Probable 2-phosphosulfolactate phosphatase (239 aa).

Belongs to the ComB family. Mg(2+) serves as cofactor.

The catalysed reaction is (2R)-O-phospho-3-sulfolactate + H2O = (2R)-3-sulfolactate + phosphate. This is Probable 2-phosphosulfolactate phosphatase from Clostridium botulinum (strain Okra / Type B1).